Consider the following 1597-residue polypeptide: Collagen alpha-1(XVII) chain (1597 aa).

2 disordered regions span residues 1-155 (MDVT…PSTR) and 168-188 (GSRS…PIPK). Residues 1-468 (MDVTKKNKRD…CGSCCSWWKW (468 aa)) lie on the Cytoplasmic side of the membrane. A nonhelical region (NC16A) region spans residues 1-567 (MDVTKKNKRD…AEQENGNLRG (567 aa)). A compositionally biased stretch (basic and acidic residues) spans 9 to 19 (RDGSEVTERII). Polar residues-rich tracts occupy residues 58 to 96 (THGS…SPGS), 111 to 120 (EGSSSGNSSP), and 170 to 184 (RSAS…SNTL). The segment at 146–231 (RLQSASPSTR…WSSTLPAGSS (86 aa)) is necessary for interaction with DST and for the recruitment of DST to hemidesmosome. Residues 469–489 (LLGLLLTWLLLLGLLFGLIAL) form a helical; Signal-anchor for type II membrane protein membrane-spanning segment. Over 490-1597 (AEEVRALKAR…KGGSWRLTSY (1108 aa)) the chain is Extracellular. 5 disordered regions span residues 562-857 (NGNL…SSSS), 907-927 (LRGP…FRVR), 970-1041 (LETY…ISSS), 1289-1316 (TAGV…VSGA), and 1344-1394 (FIVG…SSMG). The triple-helical region stretch occupies residues 568-1572 (SPGPKGDMGS…ELPLEEQPLA (1005 aa)). Positions 604–632 (PKGQKGSVGEPGMEGPMGQRGREGPMGPR) are enriched in low complexity. The span at 665 to 674 (GPKGSGGSPG) shows a compositional bias: gly residues. 2 stretches are compositionally biased toward low complexity: residues 730 to 748 (PGAV…AGPD) and 774 to 796 (DPGK…PGRP). The segment covering 820-838 (PGPPGPPGAMGPPGPPGAP) has biased composition (pro residues). Residues 847-857 (AGESFMGSSSS) are compositionally biased toward low complexity. Composition is skewed to pro residues over residues 910–922 (PPGP…PPDL), 977–986 (PPGPPGPPGP), 1023–1035 (PGPP…PGPP), 1296–1310 (PGPP…PRGP), and 1348–1357 (PPGPPGPQGP). Residues 1377–1393 (SSHSASVSRGSSYSSSM) show a composition bias toward low complexity. N-linked (GlcNAc...) asparagine glycosylation occurs at N1493. Residues 1531 to 1566 (GHPALEGTREKKETKVTKSMRGGEREASPSSHELPL) are disordered. Basic and acidic residues predominate over residues 1537–1557 (GTREKKETKVTKSMRGGEREA). A nonhelical region (NC1) region spans residues 1573–1597 (SVLAMAYGVHVKISPKGGSWRLTSY).

Homotrimers of alpha 1(XVII)chains. Interacts (via cytoplasmic region) with ITGB4 (via cytoplasmic region). Interacts (via cytoplasmic region) with DST (via N-terminus). Interacts (via N-terminus) with PLEC. Interacts (via cytoplasmic region) with DSP. The intracellular/endo domain is disulfide-linked. In terms of processing, prolines at the third position of the tripeptide repeating unit (G-X-Y) are hydroxylated in some or all of the chains. Post-translationally, the ectodomain is shedded from the surface of keratinocytes resulting in a 120-kDa soluble form, also named as 120 kDa linear IgA disease antigen homolog. The shedding is mediated by membrane-bound metalloproteases. As to expression, upper lamina lucidalhemidesmosome.

The protein resides in the cell junction. The protein localises to the hemidesmosome. Its subcellular location is the membrane. It is found in the secreted. It localises to the extracellular space. The protein resides in the extracellular matrix. The protein localises to the basement membrane. The 120 kDa linear IgA disease antigen homolog is an anchoring filament component involved in dermal-epidermal cohesion. In Canis lupus familiaris (Dog), this protein is Collagen alpha-1(XVII) chain (COL17A1).